A 561-amino-acid chain; its full sequence is Efflux pump bfoC (561 aa).

The interval 1–55 is disordered; that stretch reads MSDTARILGGPSASSSRDGGMELNSFTEVSQTNSRSHSTKEEEGQVDDQQRPARE. The span at 24-36 shows a compositional bias: polar residues; the sequence is NSFTEVSQTNSRS. The segment covering 38–55 has biased composition (basic and acidic residues); it reads STKEEEGQVDDQQRPARE. The next 13 membrane-spanning stretches (helical) occupy residues 59 to 79, 103 to 123, 128 to 148, 164 to 184, 194 to 214, 222 to 242, 257 to 277, 293 to 313, 335 to 355, 378 to 398, 425 to 445, 457 to 477, and 530 to 550; these read GVLG…CIFC, DVGW…LTFG, FFPI…GSFI, VAGL…SQCV, GFIM…GGAF, WCFY…LFTF, AVGL…CLLL, VVAL…LQLW, LYGF…PIWF, VVFA…GPFM, IGYQ…PIFV, TATA…VSVA, and VHTF…ATVI.

This sequence belongs to the major facilitator superfamily. TCR/Tet family.

It is found in the cell membrane. Functionally, efflux pump; part of the gene cluster that mediates the biosynthesis of bifonsecin B, a dimeric gamma-naphthopyrone. This Aspergillus brasiliensis (strain CBS 101740 / IMI 381727 / IBT 21946) protein is Efflux pump bfoC.